A 270-amino-acid chain; its full sequence is Glutamate racemase (270 aa).

Substrate-binding positions include 13-14 (DS) and 45-46 (YG). Cys77 serves as the catalytic Proton donor/acceptor. 78 to 79 (NT) is a binding site for substrate. Catalysis depends on Cys185, which acts as the Proton donor/acceptor. 186–187 (TH) is a substrate binding site.

The protein belongs to the aspartate/glutamate racemases family.

It catalyses the reaction L-glutamate = D-glutamate. Its pathway is cell wall biogenesis; peptidoglycan biosynthesis. Functionally, provides the (R)-glutamate required for cell wall biosynthesis. In Vibrio parahaemolyticus serotype O3:K6 (strain RIMD 2210633), this protein is Glutamate racemase.